Consider the following 426-residue polypeptide: Enolase (426 aa).

A (2R)-2-phosphoglycerate-binding site is contributed by Gln-163. Catalysis depends on Glu-205, which acts as the Proton donor. Residues Asp-242, Glu-286, and Asp-313 each contribute to the Mg(2+) site. Residues Lys-338, Arg-367, Ser-368, and Lys-389 each contribute to the (2R)-2-phosphoglycerate site. Lys-338 serves as the catalytic Proton acceptor.

The protein belongs to the enolase family. Mg(2+) is required as a cofactor.

It localises to the cytoplasm. The protein localises to the secreted. It is found in the cell surface. The enzyme catalyses (2R)-2-phosphoglycerate = phosphoenolpyruvate + H2O. Its pathway is carbohydrate degradation; glycolysis; pyruvate from D-glyceraldehyde 3-phosphate: step 4/5. Catalyzes the reversible conversion of 2-phosphoglycerate (2-PG) into phosphoenolpyruvate (PEP). It is essential for the degradation of carbohydrates via glycolysis. This chain is Enolase, found in Helicobacter pylori (strain G27).